The following is a 158-amino-acid chain: SsrA-binding protein (158 aa).

The interval 135-158 (DKRKTLKDRDWERDKQRGFKKDLD) is disordered. Over residues 141 to 158 (KDRDWERDKQRGFKKDLD) the composition is skewed to basic and acidic residues.

This sequence belongs to the SmpB family.

The protein localises to the cytoplasm. In terms of biological role, required for rescue of stalled ribosomes mediated by trans-translation. Binds to transfer-messenger RNA (tmRNA), required for stable association of tmRNA with ribosomes. tmRNA and SmpB together mimic tRNA shape, replacing the anticodon stem-loop with SmpB. tmRNA is encoded by the ssrA gene; the 2 termini fold to resemble tRNA(Ala) and it encodes a 'tag peptide', a short internal open reading frame. During trans-translation Ala-aminoacylated tmRNA acts like a tRNA, entering the A-site of stalled ribosomes, displacing the stalled mRNA. The ribosome then switches to translate the ORF on the tmRNA; the nascent peptide is terminated with the 'tag peptide' encoded by the tmRNA and targeted for degradation. The ribosome is freed to recommence translation, which seems to be the essential function of trans-translation. In Psychrobacter arcticus (strain DSM 17307 / VKM B-2377 / 273-4), this protein is SsrA-binding protein.